The following is a 470-amino-acid chain: UDP-N-acetylmuramate--L-alanine ligase (470 aa).

118-124 (GTHGKTT) is an ATP binding site.

This sequence belongs to the MurCDEF family.

The protein resides in the cytoplasm. The enzyme catalyses UDP-N-acetyl-alpha-D-muramate + L-alanine + ATP = UDP-N-acetyl-alpha-D-muramoyl-L-alanine + ADP + phosphate + H(+). Its pathway is cell wall biogenesis; peptidoglycan biosynthesis. Cell wall formation. This chain is UDP-N-acetylmuramate--L-alanine ligase, found in Cereibacter sphaeroides (strain KD131 / KCTC 12085) (Rhodobacter sphaeroides).